A 289-amino-acid chain; its full sequence is Rhodopsin (289 aa).

Over 1 to 7 (YLVNPAA) the chain is Extracellular. The chain crosses the membrane as a helical span at residues 8–32 (YAALGAYMFLLILIGFPVNFLTLYV). Residues 33 to 44 (TLEHKKLRTPLN) lie on the Cytoplasmic side of the membrane. A helical membrane pass occupies residues 45–67 (YILLNLAVADLFMVLGGFTTTMY). Over 68–81 (TSMHGYFVLGRLGC) the chain is Extracellular. Cys-81 and Cys-158 form a disulfide bridge. A helical membrane pass occupies residues 82-104 (NLEGFFATLGGEIALWSLVVLAI). Positions 105–107 (ERW) match the 'Ionic lock' involved in activated form stabilization motif. Topologically, residues 105–123 (ERWIVVCKPISNFRFTEDH) are cytoplasmic. A helical transmembrane segment spans residues 124–144 (AIMGLAFSWVMALSCSVPPLV). The Extracellular portion of the chain corresponds to 145 to 173 (GWSRYIPEAMQCSCGVDYYTRAEGFNTES). The chain crosses the membrane as a helical span at residues 174 to 195 (FVLYMFTVHFLIPLSVIFFCYG). The Cytoplasmic portion of the chain corresponds to 196–223 (RLLCAVKEAAAAQQESETTQRSEKEVSR). A helical transmembrane segment spans residues 224-245 (MVVLMVIGFLVCWLPYASTAWW). Topologically, residues 246-257 (IFCNQGSEFGPV) are extracellular. A helical membrane pass occupies residues 258-279 (FMTIPAFFAKSSAIYNPMIYIC). Lys-267 is subject to N6-(retinylidene)lysine. At 280–289 (MNKQFRHCMI) the chain is on the cytoplasmic side.

The protein belongs to the G-protein coupled receptor 1 family. Opsin subfamily. Phosphorylated on some or all of the serine and threonine residues present in the C-terminal region. In terms of processing, contains one covalently linked retinal chromophore.

The protein resides in the membrane. The protein localises to the cell projection. It is found in the cilium. It localises to the photoreceptor outer segment. In terms of biological role, photoreceptor required for image-forming vision at low light intensity. While most salt water fish species use retinal as chromophore, most freshwater fish use 3-dehydroretinal, or a mixture of retinal and 3-dehydroretinal. Light-induced isomerization of 11-cis to all-trans retinal triggers a conformational change that activates signaling via G-proteins. Subsequent receptor phosphorylation mediates displacement of the bound G-protein alpha subunit by arrestin and terminates signaling. The protein is Rhodopsin (rho) of Comephorus dybowskii.